The sequence spans 276 residues: Phospholipid phosphatase 2 (276 aa).

Over 1–4 (MERR) the chain is Cytoplasmic. Residues 5–25 (WVFVLLDVLCVLVASLPFIIL) traverse the membrane as a helical segment. At 26-51 (TLVNAPYKRGFYCGDDSIRYPYRPDT) the chain is on the lumenal side. Residues 52-72 (ITHGLMAGVIITATVILVSLG) form a helical membrane-spanning segment. Topologically, residues 73 to 87 (EAYLVYTDRLYSRSN) are cytoplasmic. Residues 88–108 (FNNYVAAIYKVLGTFLFGAAV) form a helical membrane-spanning segment. Residues 109 to 161 (SQSLTDLAKYMIGRLRPSFLAVCDPDWSQVNCSGYVQLEVCRGSPANVTEARL) lie on the Lumenal side of the membrane. A phosphatase sequence motif I region spans residues 117–125 (KYMIGRLRP). 2 N-linked (GlcNAc...) asparagine glycosylation sites follow: Asn139 and Asn155. Residues 162–182 (SFYSGHSSFGMYCMLFLALYV) form a helical membrane-spanning segment. The segment at 164–167 (YSGH) is phosphatase sequence motif II. The active-site Proton donors is His167. At 183-189 (QARLCWK) the chain is on the cytoplasmic side. A helical transmembrane segment spans residues 190–210 (WARLLRPTVQFFLVAFAIYVG). The Lumenal portion of the chain corresponds to 211–218 (YTRVSDHK). A phosphatase sequence motif III region spans residues 212-223 (TRVSDHKHHWSD). His219 functions as the Nucleophile in the catalytic mechanism. Residues 219–239 (HHWSDVLVGLLQGALVACLTV) form a helical membrane-spanning segment. Topologically, residues 240–276 (RYVSDFFKSRPPQPCQEDEVPERKPSLSLTLTLGDRP) are cytoplasmic. Residues 251–276 (PQPCQEDEVPERKPSLSLTLTLGDRP) are disordered.

Belongs to the PA-phosphatase related phosphoesterase family. As to quaternary structure, forms functional homodimers and homooligomers. Can also form heterooligomers with PLPP1 and PLPP3. In terms of processing, N-glycosylated. Expressed at high levels in lung, liver and kidney; at low levels in heart and brain, and was not detected in skeletal muscle.

The protein resides in the membrane. Its subcellular location is the cell membrane. It localises to the early endosome membrane. The protein localises to the endoplasmic reticulum membrane. It catalyses the reaction a 1,2-diacyl-sn-glycero-3-phosphate + H2O = a 1,2-diacyl-sn-glycerol + phosphate. The catalysed reaction is 1,2-dihexadecanoyl-sn-glycero-3-phosphate + H2O = 1,2-dihexadecanoyl-sn-glycerol + phosphate. It carries out the reaction 1,2-di-(9Z-octadecenoyl)-sn-glycero-3-phosphate + H2O = 1,2-di-(9Z-octadecenoyl)-sn-glycerol + phosphate. The enzyme catalyses a monoacyl-sn-glycero-3-phosphate + H2O = a monoacylglycerol + phosphate. It catalyses the reaction (9Z)-octadecenoyl-sn-glycero-3-phosphate + H2O = (9Z-octadecenoyl)-glycerol + phosphate. The catalysed reaction is sphing-4-enine 1-phosphate + H2O = sphing-4-enine + phosphate. It carries out the reaction an N-acylsphing-4-enine 1-phosphate + H2O = an N-acylsphing-4-enine + phosphate. The enzyme catalyses N-(octanoyl)-sphing-4-enine-1-phosphate + H2O = N-octanoylsphing-4-enine + phosphate. It catalyses the reaction N-(9Z-octadecenoyl)-ethanolamine phosphate + H2O = N-(9Z-octadecenoyl) ethanolamine + phosphate. It participates in lipid metabolism; phospholipid metabolism. Magnesium-independent phospholipid phosphatase. Insensitive to N-ethylmaleimide. Its function is as follows. Magnesium-independent phospholipid phosphatase that catalyzes the dephosphorylation of a variety of glycerolipid and sphingolipid phosphate esters including phosphatidate/PA, lysophosphatidate/LPA, sphingosine 1-phosphate/S1P and ceramide 1-phosphate/C1P. Has no apparent extracellular phosphatase activity and therefore most probably acts intracellularly. Also acts on N-oleoyl ethanolamine phosphate/N-(9Z-octadecenoyl)-ethanolamine phosphate, a potential physiological compound. Through dephosphorylation of these bioactive lipid mediators produces new bioactive compounds and may regulate signal transduction in different cellular processes. Indirectly regulates, for instance, cell cycle G1/S phase transition through its phospholipid phosphatase activity. The sequence is that of Phospholipid phosphatase 2 from Mus musculus (Mouse).